The sequence spans 949 residues: Translation initiation factor IF-2 (949 aa).

3 disordered regions span residues 54–183, 217–288, and 305–357; these read FLKP…EAAP, LPAA…EVAL, and EVVA…EMQA. Composition is skewed to basic and acidic residues over residues 67-92 and 101-164; these read DQEK…ERHI and IEAK…EEAA. Low complexity-rich tracts occupy residues 165-183 and 217-228; these read RAAA…EAAP and LPAAAPAAPSAP. 2 stretches are compositionally biased toward basic and acidic residues: residues 235–288 and 330–339; these read PVEE…EVAL and KYQDNEDRLQ. Residues 445-619 form the tr-type G domain; sequence TRPPVITVMG…EMLNLQSNPT (175 aa). The interval 454–461 is G1; the sequence is GHVDHGKT. 454–461 is a binding site for GTP; the sequence is GHVDHGKT. Residues 479 to 483 are G2; the sequence is GITQH. Residues 501–504 form a G3 region; that stretch reads DTPG. Residues 501 to 505 and 555 to 558 each bind GTP; these read DTPGH and NKID. Residues 555–558 form a G4 region; that stretch reads NKID. A G5 region spans residues 591-593; that stretch reads SAK.

It belongs to the TRAFAC class translation factor GTPase superfamily. Classic translation factor GTPase family. IF-2 subfamily.

The protein resides in the cytoplasm. In terms of biological role, one of the essential components for the initiation of protein synthesis. Protects formylmethionyl-tRNA from spontaneous hydrolysis and promotes its binding to the 30S ribosomal subunits. Also involved in the hydrolysis of GTP during the formation of the 70S ribosomal complex. In Magnetococcus marinus (strain ATCC BAA-1437 / JCM 17883 / MC-1), this protein is Translation initiation factor IF-2.